The chain runs to 365 residues: Class I histocompatibility antigen, Gogo-A*0101 alpha chain (365 aa).

The first 24 residues, 1 to 24, serve as a signal peptide directing secretion; the sequence is MAVMAPRTLVLLLSGALALTQTWA. The alpha-1 stretch occupies residues 25-114; that stretch reads GSHSMRYFST…LRGYYNQSED (90 aa). Over 25–308 the chain is Extracellular; the sequence is GSHSMRYFST…EPSSQPTIPI (284 aa). N110 carries an N-linked (GlcNAc...) asparagine glycan. An alpha-2 region spans residues 115–206; that stretch reads GSHTIQRMYG…ENGKETLQRT (92 aa). 2 cysteine pairs are disulfide-bonded: C125-C188 and C227-C283. An alpha-3 region spans residues 207–298; the sequence is DAPKTHMTHH…GLPEPLTLRW (92 aa). In terms of domain architecture, Ig-like C1-type spans 209 to 297; it reads PKTHMTHHAV…EGLPEPLTLR (89 aa). The segment at 299–308 is connecting peptide; it reads EPSSQPTIPI. Residues 309-332 form a helical membrane-spanning segment; that stretch reads VGIIAGLVLFGAVIAGAVVAAVRW. Topologically, residues 333-365 are cytoplasmic; sequence RRKSSDRKGGSYSQAASSDSAQGSDVSLTACKV. The tract at residues 338–365 is disordered; sequence DRKGGSYSQAASSDSAQGSDVSLTACKV. Positions 342–359 are enriched in low complexity; that stretch reads GSYSQAASSDSAQGSDVS. The residue at position 343 (S343) is a Phosphoserine. Y344 carries the post-translational modification Phosphotyrosine. A phosphoserine mark is found at S345, S349, S350, S352, S356, and S359.

It belongs to the MHC class I family. As to quaternary structure, heterodimer of an alpha chain and a beta chain (beta-2-microglobulin).

The protein resides in the membrane. Functionally, involved in the presentation of foreign antigens to the immune system. The protein is Class I histocompatibility antigen, Gogo-A*0101 alpha chain of Gorilla gorilla gorilla (Western lowland gorilla).